Consider the following 586-residue polypeptide: Acetylcholinesterase (586 aa).

An N-terminal signal peptide occupies residues 1-21 (MNLLVTSSLGVLLHLVVLCQA). The N-linked (GlcNAc...) asparagine glycan is linked to asparagine 80. Cysteine 88 and cysteine 115 are joined by a disulfide. Residue serine 221 is the Acyl-ester intermediate of the active site. Cysteine 275 and cysteine 286 are disulfide-bonded. The Charge relay system role is filled by glutamate 348. Cysteine 423 and cysteine 542 are oxidised to a cystine. N-linked (GlcNAc...) asparagine glycosylation occurs at asparagine 437. Histidine 461 functions as the Charge relay system in the catalytic mechanism. N-linked (GlcNAc...) asparagine glycosylation is found at asparagine 478 and asparagine 554. Serine 564 carries GPI-anchor amidated serine lipidation. The propeptide at 565–586 (SGTSSSKGIIFYVLFSILYLIF) is removed in mature form.

This sequence belongs to the type-B carboxylesterase/lipase family. Isoform H form is a homodimer; the asymmetric form is a disulfide-bonded oligomer composed of a collagenic subunit (Q) and a variable number of T catalytic subunits. In terms of processing, an interchain disulfide bond is present in what becomes position 593 of the T isoform. Found in the synapses and to a lower extent in extrajunctional areas of muscle and nerve, and on erythrocyte membranes.

The protein localises to the cell membrane. The protein resides in the synapse. The catalysed reaction is acetylcholine + H2O = choline + acetate + H(+). With respect to regulation, inhibited by substrate concentrations above 0.5 mM. Functionally, terminates signal transduction at the neuromuscular junction by rapid hydrolysis of the acetylcholine released into the synaptic cleft. May be involved in cell-cell interactions. The protein is Acetylcholinesterase (ache) of Tetronarce californica (Pacific electric ray).